A 351-amino-acid chain; its full sequence is Biotin synthase (351 aa).

The region spanning 73–298 is the Radical SAM core domain; sequence PEVEVEGIIS…RTILRYSGGR (226 aa). [4Fe-4S] cluster is bound by residues cysteine 88, cysteine 92, and cysteine 95. 4 residues coordinate [2Fe-2S] cluster: cysteine 131, cysteine 164, cysteine 223, and arginine 293.

It belongs to the radical SAM superfamily. Biotin synthase family. In terms of assembly, homodimer. It depends on [4Fe-4S] cluster as a cofactor. The cofactor is [2Fe-2S] cluster.

The catalysed reaction is (4R,5S)-dethiobiotin + (sulfur carrier)-SH + 2 reduced [2Fe-2S]-[ferredoxin] + 2 S-adenosyl-L-methionine = (sulfur carrier)-H + biotin + 2 5'-deoxyadenosine + 2 L-methionine + 2 oxidized [2Fe-2S]-[ferredoxin]. It participates in cofactor biosynthesis; biotin biosynthesis; biotin from 7,8-diaminononanoate: step 2/2. Functionally, catalyzes the conversion of dethiobiotin (DTB) to biotin by the insertion of a sulfur atom into dethiobiotin via a radical-based mechanism. The protein is Biotin synthase of Frankia alni (strain DSM 45986 / CECT 9034 / ACN14a).